Here is a 138-residue protein sequence, read N- to C-terminus: Acidic phospholipase A2 BthA-1 (138 aa).

A signal peptide spans 1-16; the sequence is MRTLWIMAVLLVGVEG. 7 cysteine pairs are disulfide-bonded: Cys-42–Cys-131, Cys-44–Cys-60, Cys-59–Cys-111, Cys-65–Cys-138, Cys-66–Cys-104, Cys-73–Cys-97, and Cys-91–Cys-102. Residues Tyr-43, Gly-47, and Gly-48 each coordinate Ca(2+). His-63 is an active-site residue. Asp-64 serves as a coordination point for Ca(2+). Asp-105 is a catalytic residue.

Belongs to the phospholipase A2 family. Group II subfamily. D49 sub-subfamily. Homodimer; non-covalently linked. It depends on Ca(2+) as a cofactor. As to expression, expressed by the venom gland.

Its subcellular location is the secreted. The catalysed reaction is a 1,2-diacyl-sn-glycero-3-phosphocholine + H2O = a 1-acyl-sn-glycero-3-phosphocholine + a fatty acid + H(+). Its activity is regulated as follows. Inhibited by EDTA and bromophenacyl bromide (BPB). Snake venom phospholipase A2 (PLA2) that displays edema-inducing activities (activity that is inhibited by EDTA and dexamethasone), inhibits phospholipid-dependent collagen/ADP-induced platelet aggregation, possess hypotensive as well as anticoagulant activities. In addition, this enzyme shows bactericidal activity against E.coli and S.aureus. PLA2 catalyzes the calcium-dependent hydrolysis of the 2-acyl groups in 3-sn-phosphoglycerides. The chain is Acidic phospholipase A2 BthA-1 from Bothrops jararacussu (Jararacussu).